Here is a 62-residue protein sequence, read N- to C-terminus: Defensin-like protein A (62 aa).

The signal sequence occupies residues 1–26 (MRCVVLFMVSCLLIVLLINHFEEVEA). Residues cysteine 42 and cysteine 52 are joined by a disulfide bond.

The protein belongs to the DEFL family.

The protein resides in the secreted. Truncated and inactivated form of SCRA, a protein involved in male-mediated self-incompatibility when active. Most A.thaliana cultivars contain such an inactive form and thus, are self-fertiles. The chain is Defensin-like protein A (SCRA) from Arabidopsis thaliana (Mouse-ear cress).